The chain runs to 628 residues: DNA primase (628 aa).

The segment at 40 to 64 (CPFHEERSPSFSVAEDKQIFHCFGC) adopts a CHC2-type zinc-finger fold. A Toprim domain is found at 269–351 (NTVLLFEGFM…DLSIVSIPEK (83 aa)). The Mg(2+) site is built by E275, D319, and D321.

The protein belongs to the DnaG primase family. As to quaternary structure, monomer. Interacts with DnaB. Zn(2+) is required as a cofactor. Requires Mg(2+) as cofactor.

The enzyme catalyses ssDNA + n NTP = ssDNA/pppN(pN)n-1 hybrid + (n-1) diphosphate.. Its function is as follows. RNA polymerase that catalyzes the synthesis of short RNA molecules used as primers for DNA polymerase during DNA replication. In Enterococcus faecalis (strain ATCC 700802 / V583), this protein is DNA primase.